We begin with the raw amino-acid sequence, 1185 residues long: Calmodulin-binding transcription activator homolog 1 (1185 aa).

A DNA-binding region (CG-1) is located at residues 72–200 (AVELFPCFKD…YLNVKTNNKI (129 aa)). Disordered regions lie at residues 252–277 (GVNL…RRNS) and 390–411 (KIRS…VTST). Low complexity predominate over residues 393-411 (SGSQESPMGPPSSSSVTST). Positions 418 to 498 (EMTPSSSSLK…ISTASEFTYE (81 aa)) constitute an IPT/TIG domain. The stretch at 616–646 (DGSTPLHTACKNSASRIARLIISIDSSAIDV) is one ANK repeat. The IQ domain maps to 957–984 (EAAMVIQRAYRVYRARSTTRRQEDIERR). Residues 1121 to 1185 (CPQTSGDQRN…KPPYGCGTLA (65 aa)) are disordered. Positions 1128–1147 (QRNKRDSDGERKRDAHHDAP) are enriched in basic and acidic residues.

It belongs to the CAMTA family. As to quaternary structure, may interact with calmodulin. Expressed broadly in the nervous system.

The protein localises to the nucleus. Its function is as follows. Transcription factor. Positively modulates neuronal levels of the ubiquitous Ca2+ sensor calmodulin/cmd-1, probably by direct binding to the cmd-1 promoter, thereby regulating Ca2+ signaling, physiology, and behavior. The chain is Calmodulin-binding transcription activator homolog 1 from Caenorhabditis elegans.